The sequence spans 331 residues: DSC E3 ubiquitin ligase complex subunit D (331 aa).

The N-linked (GlcNAc...) asparagine glycan is linked to N26. The next 3 helical transmembrane spans lie at 63–83 (ILIY…ILFA), 107–127 (PFIG…NFFT), and 159–179 (LFLL…LIVE). Residues 188 to 225 (STTSTEILRVQDHDSEERGVHRTRPESRSSVVGAELDE) are disordered. Basic and acidic residues predominate over residues 196–214 (RVQDHDSEERGVHRTRPES).

As to quaternary structure, component of the DSC E3 ubiquitin ligase complex composed of dscA, dscB, dscC and dscD.

Its subcellular location is the endoplasmic reticulum membrane. It participates in protein modification; protein ubiquitination. Its function is as follows. Component of the DSC E3 ubiquitin ligase complex which is required for the srbA transcriptional activator proteolytic cleavage to release the soluble transcription factor from the membrane in low oxygen or sterol conditions. Required for growth during hypoxia and triazole drug susceptibility, as well as for virulence in a murine model of invasive pulmonary aspergillosis (IPA). This chain is DSC E3 ubiquitin ligase complex subunit D, found in Aspergillus fumigatus (strain ATCC MYA-4609 / CBS 101355 / FGSC A1100 / Af293) (Neosartorya fumigata).